The following is a 681-amino-acid chain: Phenylalanine--tRNA ligase beta subunit (681 aa).

Residues 288 to 363 (PARETVLLRP…RIHGYDQIPE (76 aa)) form the B5 domain. 4 residues coordinate Mg(2+): D341, D347, E350, and E351. One can recognise an FDX-ACB domain in the interval 586-681 (SSFPSIQRDL…EKQLEAVLLR (96 aa)).

This sequence belongs to the phenylalanyl-tRNA synthetase beta subunit family. Type 1 subfamily. As to quaternary structure, tetramer of two alpha and two beta subunits. Mg(2+) serves as cofactor.

The protein resides in the cytoplasm. The catalysed reaction is tRNA(Phe) + L-phenylalanine + ATP = L-phenylalanyl-tRNA(Phe) + AMP + diphosphate + H(+). In Rhodopirellula baltica (strain DSM 10527 / NCIMB 13988 / SH1), this protein is Phenylalanine--tRNA ligase beta subunit.